The chain runs to 127 residues: Large ribosomal subunit protein bL20 (127 aa).

This sequence belongs to the bacterial ribosomal protein bL20 family.

Binds directly to 23S ribosomal RNA and is necessary for the in vitro assembly process of the 50S ribosomal subunit. It is not involved in the protein synthesizing functions of that subunit. The sequence is that of Large ribosomal subunit protein bL20 from Corynebacterium diphtheriae (strain ATCC 700971 / NCTC 13129 / Biotype gravis).